Reading from the N-terminus, the 219-residue chain is Bacterial microcompartment shell protein EutL (219 aa).

BMC circularly permuted domains are found at residues 1–113 (MPAL…GAAF) and 114–215 (QWAN…ARNP). Residues D45, D46, E83, and F113 each contribute to the ethanolamine site. The tract at residues 45–46 (DD) is part of the acidic patch lining the small pore. E157 lines the Zn(2+) pocket. 183–185 (TNY) is a binding site for ethanolamine.

It belongs to the EutL/PduB family. In terms of assembly, homotrimerizes to form a pseudohexamer. The trimers form a two-dimensional array about 37 Angstroms thick.

It is found in the bacterial microcompartment. It functions in the pathway amine and polyamine degradation; ethanolamine degradation. A component of the bacterial microcompartment (BMC) shell dedicated to ethanolamine degradation. Two crystal forms have been seen; a form with a closed central pore that has 3 very small (1.1-2.2 Angstroms) channels per trimer lined by acidic and aromatic residues. A form with a large central pore (8-12 Angstroms) has also been seen; this is probably a functional pore which allows molecules to enter and exit the BMC in a selective, gated manner. Another group only sees the central pore in the presence of Zn(2+); soaking crystals in ZnCl(2) leads to dramatic conformational changes that open a central pore of about 12 Angstroms. Whether Zn(2+) binding is physiologically relevant is unclear, however it suggests a gating mechanism exists. Ethanolamine-binding by the small channels has been hypothesized to stabilize the EutL central pore in a closed (non-transporting) state. An open pore is thought to be large enough to transport ATP and/or cobalamin. The polypeptide is Bacterial microcompartment shell protein EutL (eutL) (Escherichia coli (strain K12)).